A 716-amino-acid polypeptide reads, in one-letter code: Epidermal growth factor receptor kinase substrate 8-like protein 2 (716 aa).

2 disordered regions span residues 1 to 25 and 182 to 243; these read MSQSGTMSCCPGATNGSLGRSDGVA and PQTL…SQEE. The PID domain occupies 46-202; that stretch reads MHETSQYHVQ…RQRQSILPPP (157 aa). Pro residues predominate over residues 199-208; the sequence is LPPPQGPAPI. A compositionally biased stretch (basic and acidic residues) spans 234–243; sequence GFRRRESQEE. Serine 240 carries the post-translational modification Phosphoserine. Threonine 304 is modified (phosphothreonine). Positions 449-488 are disordered; sequence VSPVSRQSIRNSQKHSPTSEPTPPGDALPPVSSPHTHRGY. Serine 450 carries the post-translational modification Phosphoserine. Polar residues predominate over residues 452 to 467; the sequence is VSRQSIRNSQKHSPTS. Phosphothreonine is present on threonine 470. Residues 493–552 enclose the SH3 domain; sequence AMAKYVKILYDFTARNANELSVLKDEVLEVLEDGRQWWKLRSRSGQAGYVPCNILGEARP. Serine 571 bears the Phosphoserine mark.

It belongs to the EPS8 family. In terms of assembly, interacts with ABI1. Part of a complex that contains SOS1, ABI1 and EPS8L2. Associates with F-actin.

It is found in the cytoplasm. Its subcellular location is the cell projection. The protein resides in the stereocilium. Functionally, stimulates guanine exchange activity of SOS1. May play a role in membrane ruffling and remodeling of the actin cytoskeleton. In the cochlea, is required for stereocilia maintenance in adult hair cells. The protein is Epidermal growth factor receptor kinase substrate 8-like protein 2 (EPS8L2) of Pongo abelii (Sumatran orangutan).